The following is a 262-amino-acid chain: 1-(5-phosphoribosyl)-5-[(5-phosphoribosylamino)methylideneamino] imidazole-4-carboxamide isomerase (262 aa).

The Proton acceptor role is filled by D8. The active-site Proton donor is D130.

This sequence belongs to the HisA/HisF family.

It is found in the cytoplasm. The catalysed reaction is 1-(5-phospho-beta-D-ribosyl)-5-[(5-phospho-beta-D-ribosylamino)methylideneamino]imidazole-4-carboxamide = 5-[(5-phospho-1-deoxy-D-ribulos-1-ylimino)methylamino]-1-(5-phospho-beta-D-ribosyl)imidazole-4-carboxamide. It participates in amino-acid biosynthesis; L-histidine biosynthesis; L-histidine from 5-phospho-alpha-D-ribose 1-diphosphate: step 4/9. This Chloroherpeton thalassium (strain ATCC 35110 / GB-78) protein is 1-(5-phosphoribosyl)-5-[(5-phosphoribosylamino)methylideneamino] imidazole-4-carboxamide isomerase.